Reading from the N-terminus, the 551-residue chain is E3 SUMO-protein ligase CBX4 (551 aa).

The 59-residue stretch at F11–Y69 folds into the Chromo domain. Residues K77, K106, K114, and K125 each participate in a glycyl lysine isopeptide (Lys-Gly) (interchain with G-Cter in SUMO2) cross-link. The tract at residues K125–Y152 is disordered. Position 149 is an N6-acetyllysine; alternate (K149). A Glycyl lysine isopeptide (Lys-Gly) (interchain with G-Cter in SUMO2); alternate cross-link involves residue K149. Residues K157, K167, and K178 each participate in a glycyl lysine isopeptide (Lys-Gly) (interchain with G-Cter in SUMO2) cross-link. The segment at Q172 to H193 is disordered. The residue at position 182 (S182) is a Phosphoserine. Residues K191, K205, K212, K223, K249, K268, K278, and K280 each participate in a glycyl lysine isopeptide (Lys-Gly) (interchain with G-Cter in SUMO2) cross-link. Positions G216–N244 are disordered. 3 stretches are compositionally biased toward basic and acidic residues: residues S281 to S291, A298 to F310, and S317 to E332. 2 disordered regions span residues S281–L399 and T430–A451. Glycyl lysine isopeptide (Lys-Gly) (interchain with G-Cter in SUMO2) cross-links involve residues K321, K353, and K366. A compositionally biased stretch (basic residues) spans P381–T396. The residue at position 463 (S463) is a Phosphoserine. K490 participates in a covalent cross-link: Glycyl lysine isopeptide (Lys-Gly) (interchain with G-Cter in SUMO2); alternate. K490 participates in a covalent cross-link: Glycyl lysine isopeptide (Lys-Gly) (interchain with G-Cter in SUMO); alternate.

As to quaternary structure, interacts with SUV39H1 and HIPK2. Interacts with CSNK2B. Component of a PRC1-like complex. The composition of the PRC1 complex differs between the PRC1 complex in pluripotent embryonic stem cells containing RNF2, CBX7 and PCGF2, and the PRC1 complex in differentiating cells containing RNF2, CBX2, CBX4 and BMI1. Interacts with RNF2. Interacts (via chromodomain) with histone H3K9Me3 and single-stranded RNA (ssRNA). Interacts with CHTOP. May interact with H3C15 and H3C1. Interacts with PRDM1. Post-translationally, ubiquitinated. Ubiquitination regulates the function of the Polycomb group (PcG) multiprotein PRC1-like complex. Deubiquitinated by USP26. Expressed in embryoid bodies.

The protein localises to the nucleus. It localises to the nucleus speckle. The protein operates within protein modification; protein sumoylation. In terms of biological role, E3 SUMO-protein ligase that catalyzes sumoylation of target proteins by promoting the transfer of SUMO from the E2 enzyme to the substrate. Involved in the sumoylation of HNRNPK, a p53/TP53 transcriptional coactivator, hence indirectly regulates p53/TP53 transcriptional activation resulting in p21/CDKN1A expression. Functionally, component of a Polycomb group (PcG) multiprotein PRC1-like complex, a complex class required to maintain the transcriptionally repressive state of many genes, including Hox genes, throughout development. PcG PRC1 complex acts via chromatin remodeling and modification of histones; it mediates monoubiquitination of histone H2A 'Lys-119', rendering chromatin heritably changed in its expressibility. Binds to histone H3 trimethylated at 'Lys-9' (H3K9me3). Plays a role in the lineage differentiation of the germ layers in embryonic development. The chain is E3 SUMO-protein ligase CBX4 (Cbx4) from Mus musculus (Mouse).